The primary structure comprises 207 residues: ATP synthase subunit 5, mitochondrial (207 aa).

It belongs to the ATPase delta chain family. In terms of assembly, F-type ATPases have 2 components, CF(1) - the catalytic core - and CF(0) - the membrane proton channel. CF(1) has five subunits: alpha(3), beta(3), gamma(1), delta(1), epsilon(1). CF(0) has three main subunits: a, b and c.

Its subcellular location is the mitochondrion. It localises to the mitochondrion inner membrane. Its function is as follows. Mitochondrial membrane ATP synthase (F(1)F(0) ATP synthase or Complex V) produces ATP from ADP in the presence of a proton gradient across the membrane which is generated by electron transport complexes of the respiratory chain. F-type ATPases consist of two structural domains, F(1) - containing the extramembraneous catalytic core and F(0) - containing the membrane proton channel, linked together by a central stalk and a peripheral stalk. During catalysis, ATP synthesis in the catalytic domain of F(1) is coupled via a rotary mechanism of the central stalk subunits to proton translocation. Part of the complex F(0) domain and the peripheric stalk, which acts as a stator to hold the catalytic alpha(3)beta(3) subcomplex and subunit a/ATP6 static relative to the rotary elements. The sequence is that of ATP synthase subunit 5, mitochondrial (ATP5) from Candida glabrata (strain ATCC 2001 / BCRC 20586 / JCM 3761 / NBRC 0622 / NRRL Y-65 / CBS 138) (Yeast).